The following is a 466-amino-acid chain: Replication termination factor 1 (466 aa).

2 DNA-binding domain regions span residues 94–249 (RDYT…LRRK) and 250–421 (YNPF…KKTL). 2 HTH myb-type domains span residues 251–304 (NPFK…QPGE) and 305–363 (INRS…SRDI). DNA-binding regions (H-T-H motif) lie at residues 278–300 (WSLIGKLSNRLPMHCRDHWRDYI) and 336–359 (WSLISKNMRNRHRHHCRWKYYTLI).

The protein resides in the nucleus. In terms of biological role, mediates site-specific replication termination at the polar replication barrier RTS1, a barrier which ensures that replication of the mat1 locus in S.pombe occurs in the centromere-proximal direction. The polypeptide is Replication termination factor 1 (rtf1) (Schizosaccharomyces pombe (strain 972 / ATCC 24843) (Fission yeast)).